The following is a 336-amino-acid chain: Fructose-1,6-bisphosphatase class 1 (336 aa).

Mg(2+) contacts are provided by E92, D115, L117, and D118. Substrate is bound by residues 118–121, N211, Y244, 262–264, and K274; these read DGSS and YLY. Residue E280 participates in Mg(2+) binding.

It belongs to the FBPase class 1 family. In terms of assembly, homotetramer. The cofactor is Mg(2+).

It is found in the cytoplasm. It carries out the reaction beta-D-fructose 1,6-bisphosphate + H2O = beta-D-fructose 6-phosphate + phosphate. The protein operates within carbohydrate biosynthesis; gluconeogenesis. This Vibrio atlanticus (strain LGP32) (Vibrio splendidus (strain Mel32)) protein is Fructose-1,6-bisphosphatase class 1.